Consider the following 517-residue polypeptide: FERM domain-containing protein 5 (517 aa).

One can recognise an FERM domain in the interval 17–298 (YSCTVRLLDD…ENQAFYKLEK (282 aa)). Residues 308–353 (SNLFFKGSRFRYSGRVAKEVMESSAKIKREPPEIHRAGMVPSRSCP) are interaction with ROCK1. The segment at 344 to 367 (AGMVPSRSCPSITHGPRLSSVPRT) is disordered. Ser375 is modified (phosphoserine). Disordered stretches follow at residues 385 to 408 (DSAHSTPVRSSSHGDTFLPHVRSS) and 485 to 517 (GHGGSEQEQRVHLKGPQLQQQQWKGWGKSVPLD). The span at 388-398 (HSTPVRSSSHG) shows a compositional bias: polar residues. Over residues 498–517 (KGPQLQQQQWKGWGKSVPLD) the composition is skewed to low complexity.

Interacts with CTNND1, ITGB5 (via cytoplasmic domain) and ROCK1.

The protein localises to the cell junction. It localises to the adherens junction. In terms of biological role, may be involved in regulation of cell migration. May regulate cell-matrix interactions via its interaction with ITGB5 and modifying ITGB5 cytoplasmic tail interactions such as with FERMT2 and TLN1. May regulate ROCK1 kinase activity possibly involved in regulation of actin stress fiber formation. This chain is FERM domain-containing protein 5 (Frmd5), found in Mus musculus (Mouse).